The chain runs to 284 residues: Nucleotide-binding protein Pput_0988 (284 aa).

An ATP-binding site is contributed by 8–15 (GRSGSGKS). Position 60–63 (60–63 (DARN)) interacts with GTP.

This sequence belongs to the RapZ-like family.

Functionally, displays ATPase and GTPase activities. The polypeptide is Nucleotide-binding protein Pput_0988 (Pseudomonas putida (strain ATCC 700007 / DSM 6899 / JCM 31910 / BCRC 17059 / LMG 24140 / F1)).